The primary structure comprises 157 residues: Endoribonuclease YbeY (157 aa).

Positions 122, 126, and 132 each coordinate Zn(2+).

The protein belongs to the endoribonuclease YbeY family. Requires Zn(2+) as cofactor.

It localises to the cytoplasm. Functionally, single strand-specific metallo-endoribonuclease involved in late-stage 70S ribosome quality control and in maturation of the 3' terminus of the 16S rRNA. The sequence is that of Endoribonuclease YbeY from Bacillus subtilis (strain 168).